The primary structure comprises 328 residues: MAKPAKRVAVTGAAGQIAYSLLFRIANGDLLGKDQPVILQLLDLPQAQAAVKGVVMELDDCAFPLLAGVVITDDPKVAFKDADVALLVGARPRSKGMERKDLLSANAEIFTVQGAALNEVASRDVKVLVVGNPANTNAYIAMKSAPDLPKKNFTAMLRLDHNRALSQLAAKSGKPVASIEKLAVWGNHSPTMYPDFRFATAEGESLLKLINDDVWNRDTFIPTVGKRGAAIIEARGLSSAASAANAAIDHVRDWVLGTNGKWVTMGIPSDGSYGIPEDIIYGVPVTCENGEYKRVEGLEIDAFSREKMDGTLAELLEERDGVAHLLKN.

An NAD(+)-binding site is contributed by 12-18; that stretch reads GAAGQIA. Positions 93 and 99 each coordinate substrate. NAD(+) is bound by residues Asn106, Gln113, and 130–132; that span reads VGN. Residues Asn132 and Arg163 each contribute to the substrate site. His188 (proton acceptor) is an active-site residue.

This sequence belongs to the LDH/MDH superfamily. MDH type 2 family.

It carries out the reaction (S)-malate + NAD(+) = oxaloacetate + NADH + H(+). Catalyzes the reversible oxidation of malate to oxaloacetate. This Burkholderia cenocepacia (strain ATCC BAA-245 / DSM 16553 / LMG 16656 / NCTC 13227 / J2315 / CF5610) (Burkholderia cepacia (strain J2315)) protein is Malate dehydrogenase.